Here is a 741-residue protein sequence, read N- to C-terminus: G2 and S phase-expressed protein 1 (741 aa).

The residue at position 73 (serine 73) is a Phosphoserine. Disordered regions lie at residues glutamate 101–valine 120, glutamate 131–serine 428, and phenylalanine 450–arginine 512. Positions alanine 106–valine 120 are enriched in polar residues. Basic and acidic residues predominate over residues glutamate 131 to threonine 147. 4 positions are modified to phosphoserine: serine 139, serine 153, serine 191, and serine 245. The segment covering serine 173–glycine 209 has biased composition (polar residues). A compositionally biased stretch (polar residues) spans isoleucine 246 to valine 261. A compositionally biased stretch (low complexity) spans serine 310 to serine 321. Serine 311 bears the Phosphoserine mark. The span at glutamine 337–serine 355 shows a compositional bias: polar residues. Residues proline 360–alanine 372 are compositionally biased toward low complexity. Polar residues predominate over residues serine 398–glutamate 408. Position 460 is a phosphoserine (serine 460). Position 465 is a phosphothreonine (threonine 465). Residues serine 476, serine 493, serine 509, and serine 514 each carry the phosphoserine modification. Over residues threonine 478–proline 497 the composition is skewed to low complexity. Threonine 518 carries the phosphothreonine modification. Phosphoserine occurs at positions 521, 541, 582, and 599. A disordered region spans residues leucine 550–proline 640. Residues glutamine 578 to proline 593 are compositionally biased toward low complexity. The residue at position 696 (threonine 696) is a Phosphothreonine. Phosphoserine occurs at positions 720, 726, and 736.

Post-translationally, phosphorylated in mitosis.

The protein resides in the cytoplasm. It is found in the cytoskeleton. In terms of biological role, may be involved in p53-induced cell cycle arrest in G2/M phase by interfering with microtubule rearrangements that are required to enter mitosis. Overexpression delays G2/M phase progression. This Mus musculus (Mouse) protein is G2 and S phase-expressed protein 1 (Gtse1).